We begin with the raw amino-acid sequence, 135 residues long: Single-stranded DNA-binding protein RIM1, mitochondrial (135 aa).

The N-terminal 17 residues, M1 to M17, are a transit peptide targeting the mitochondrion. Residues F19–K117 enclose the SSB domain.

Homotetramer. Interacts with PIF1.

Its subcellular location is the mitochondrion. This protein binds preferentially and cooperatively to single-stranded DNA (ssDNS). Involved in mitochondrial DNA replication. Stimulates PIF1 helicase activity. This is Single-stranded DNA-binding protein RIM1, mitochondrial (RIM1) from Saccharomyces cerevisiae (strain ATCC 204508 / S288c) (Baker's yeast).